A 607-amino-acid polypeptide reads, in one-letter code: Zinc finger protein 750 (607 aa).

Residues 25-51 form a CCHC-type zinc finger; the sequence is YQCFQCPFTCNIKSHLFNHMKYNLCKN. The Zn(2+) site is built by Cys-27, Cys-30, His-43, and Cys-49. The segment covering 60–78 has biased composition (polar residues); the sequence is MEQTGKASRASQHSPAFSH. Disordered regions lie at residues 60–133, 318–467, 482–511, and 575–607; these read MEQT…DKSE, RAVQ…SSQE, QALP…QDLE, and GQKR…SQNC. Basic and acidic residues-rich tracts occupy residues 79–133 and 318–334; these read NSKE…DKSE and RAVQ…RESP. Over residues 369 to 380 the composition is skewed to low complexity; that stretch reads HSGSQSHIISGS. Positions 421–432 are enriched in acidic residues; sequence DKEEDEETEEEI. A compositionally biased stretch (basic and acidic residues) spans 452 to 462; sequence HYPDRELHYDS. Polar residues predominate over residues 496-507; that stretch reads ISNAEVSTTESP. Residues 579-592 are compositionally biased toward basic residues; the sequence is ANNRPLRHTNKRAK.

Its subcellular location is the nucleus. Its function is as follows. Transcription factor involved in epidermis differentiation. The sequence is that of Zinc finger protein 750 (znf750) from Danio rerio (Zebrafish).